Consider the following 460-residue polypeptide: Bifunctional beta-D-glucosidase/beta-D-fucosidase (460 aa).

Glu-168 functions as the Proton donor in the catalytic mechanism. Residue Glu-362 is the Nucleophile of the active site.

Belongs to the glycosyl hydrolase 1 family. As to quaternary structure, monomer.

The protein resides in the secreted. It catalyses the reaction Hydrolysis of terminal, non-reducing beta-D-glucosyl residues with release of beta-D-glucose.. The enzyme catalyses Hydrolysis of terminal non-reducing beta-D-fucose residues in beta-D-fucosides.. Its activity is regulated as follows. Inhibited by Cu(2+), Ag(+) and Hg(+), but not by other cations such as Mg(2+), Ca(2+), Mn(2+) and Co(2+). Inhibited by 1-amino-1-deoxy-D-glucose and p-chloromercuribenzoic acid, but not by EDTA or dithiothreitol. Inhibited by the disaccharides sucrose, lactose and cellobiose. The monosaccharides D-fructose, D-mannose, D-xylose and D-glucose increase the beta-D-fucosidase activity, but not the beta-D-glucosidase activity. D-glucose inhibits the beta-D-glucosidase activity, but promotes the beta-D-fucosidase activity. D-fucose inhibits the beta-D-glucosidase activity and does not significantly affect the beta-D-fucosidase activity. Bifunctional beta-D-glucosidase/beta-D-fucosidase. Activity towards pNP-beta-D-fucoside is about 80-85% of the activity towards pNP-beta-D-glucoside. Also has slight activity (less than 10%) towards pNP-beta-D-galactoside, and very low activity (less than 1%) towards pNP-beta-D-xyloside. Hydrolyzes laminaribiose, sophorose, cellobiose and gentobiose. Not active against maltose, pNP-alpha-D-glucoside or pNP-beta-L-fucoside. This is Bifunctional beta-D-glucosidase/beta-D-fucosidase from Bifidobacterium breve.